The sequence spans 176 residues: MGNEASYHSEMGTHFDHDEIKRLGRSFKKMDLDKSGSLSVDEFMSLPELQQNPLVGRVIDIFDTDGNGEVDFREFIVGTSQFSVKGDEEQKLRFAFRIYDMDNDGFISNGELFQVLKMMVGNNLKDWQLQQLVDKSILVLDKDGDGRISFEEFRDVVRTMEIHKKLVVFVDHGQED.

A lipid anchor (N-myristoyl glycine) is attached at G2. EF-hand domains lie at 18 to 53, 57 to 85, 87 to 122, and 128 to 163; these read DEIKRLGRSFKKMDLDKSGSLSVDEFMSLPELQQNP, RVIDIFDTDGNGEVDFREFIVGTSQFSVK, DEEQKLRFAFRIYDMDNDGFISNGELFQVLKMMVGN, and QLQQLVDKSILVLDKDGDGRISFEEFRDVVRTMEIH. Ca(2+) is bound by residues D31, D33, S35, S37, E42, D63, D65, N67, E69, E74, D100, D102, D104, and E111. The calcineurin A binding stretch occupies residues 131–136; sequence QLVDKS. Residues D141, D143, D145, R147, and E152 each contribute to the Ca(2+) site.

The protein belongs to the calcineurin regulatory subunit family. In terms of assembly, forms a complex composed of a calmodulin-dependent catalytic subunit (also known as calcineurin A) and a regulatory Ca(2+)-binding subunit (also known as calcineurin B). There are three catalytic subunits, each encoded by a separate gene (PPP3CA, PPP3CB, and PPP3CC) and two regulatory subunits which are also encoded by separate genes (PPP3R1 and PPP3R2). Interacts with SPATA33 (via PQIIIT motif). As to expression, testis specific.

It is found in the mitochondrion. Functionally, regulatory subunit of calcineurin, a calcium-dependent, calmodulin stimulated protein phosphatase. Confers calcium sensitivity. This Rattus norvegicus (Rat) protein is Calcineurin subunit B type 2 (Ppp3r2).